The chain runs to 230 residues: MPVPSVTVTTDNEYEDISSFSSIDSYKPEPFTGFKDSEAPEQPLLKNDTIVGKGQLEDDSNVDDQHRHSDVHSHHSSSTLKRPTSNSIEKMVTHNALEGNSETVDSLKEDGLNLNKKALPDITAPVTNSAHDAAFPEEYRLETETGLVKLKTLESLKREDSRVSSTKKEHINDHTDMHSTRSKVTTNSQGSSLEPNKLNMAVEKNKKRIEKYQKHKSEKGIKGFFHRIFD.

Residues 1–11 (MPVPSVTVTTD) are compositionally biased toward polar residues. The tract at residues 1 to 88 (MPVPSVTVTT…TLKRPTSNSI (88 aa)) is disordered. A compositionally biased stretch (basic and acidic residues) spans 63 to 73 (DDQHRHSDVHS). A compositionally biased stretch (polar residues) spans 79–88 (TLKRPTSNSI). A Phosphoserine modification is found at Ser106. A compositionally biased stretch (basic and acidic residues) spans 156–179 (LKREDSRVSSTKKEHINDHTDMHS). Residues 156 to 203 (LKREDSRVSSTKKEHINDHTDMHSTRSKVTTNSQGSSLEPNKLNMAVE) are disordered. Polar residues predominate over residues 182 to 194 (SKVTTNSQGSSLE).

This is an uncharacterized protein from Saccharomyces cerevisiae (strain ATCC 204508 / S288c) (Baker's yeast).